A 301-amino-acid chain; its full sequence is Putative F-box/LRR-repeat protein 19 (301 aa).

One can recognise an F-box domain in the interval 18–66 (PDWSELTRECLLDIFSRLSQEQRWIGPMLVSKNWMNACYDPTLNTIFDL). LRR repeat units follow at residues 108 to 133 (IRHC…WIKN), 134 to 159 (CPNV…DISY), 160 to 185 (SYGI…KRNL), 231 to 256 (YSTL…DLRG), and 257 to 282 (CISL…IKPD).

This Arabidopsis thaliana (Mouse-ear cress) protein is Putative F-box/LRR-repeat protein 19 (FBL19).